The primary structure comprises 15281 residues: Cyclosporin synthetase simA (15281 aa).

The segment at Ser-34–Thr-463 is condensation 1. The segment at Ser-513 to Val-918 is adenylation 1. Positions Ala-1026–Ser-1100 constitute a Carrier 1 domain. Ser-1060 is subject to O-(pantetheine 4'-phosphoryl)serine. A condensation 2 region spans residues Ser-1118–Thr-1549. Residues Ser-1599–Val-2004 form an adenylation 2 region. A methyltransferase (M) domain 1 region spans residues Ser-2067–Val-2251. The region spanning Ala-2524–Thr-2598 is the Carrier 2 domain. The residue at position 2558 (Ser-2558) is an O-(pantetheine 4'-phosphoryl)serine. A condensation 3 region spans residues Ser-2616–Ala-3044. Positions Ser-3096–Val-3498 are adenylation 3. Residues Ser-3562–Phe-3749 form a methyltransferase (M) domain 2 region. One can recognise a Carrier 3 domain in the interval Ala-4011–Ser-4085. Ser-4045 is subject to O-(pantetheine 4'-phosphoryl)serine. The interval Val-4100–Pro-4530 is condensation 4. The interval Ser-4582–Val-4986 is adenylation 4. Residues Thr-5052 to Thr-5241 form a methyltransferase (M) domain 3 region. A Carrier 4 domain is found at Pro-5503–Ser-5577. An O-(pantetheine 4'-phosphoryl)serine modification is found at Ser-5537. Positions Val-5592–Pro-6023 are condensation 5. Residues Thr-6075 to Val-6478 form an adenylation 5 region. Residues Trp-6545–Leu-6729 are methyltransferase (M) domain 4. One can recognise a Carrier 5 domain in the interval Ala-7000–Ser-7074. An O-(pantetheine 4'-phosphoryl)serine modification is found at Ser-7034. Residues Ser-7092 to Ser-7517 are condensation 6. The interval Thr-7572 to Val-7976 is adenylation 6. Residues Pro-8060 to Ser-8134 enclose the Carrier 6 domain. Ser-8094 bears the O-(pantetheine 4'-phosphoryl)serine mark. A condensation 7 region spans residues Ser-8152 to Ile-8582. The adenylation 7 stretch occupies residues Thr-8633 to Val-9038. The methyltransferase (M) domain 5 stretch occupies residues Pro-9111 to Asp-9288. In terms of domain architecture, Carrier 7 spans Ala-9555–Ser-9629. Ser-9589 is modified (O-(pantetheine 4'-phosphoryl)serine). Positions Ser-9647–Thr-10077 are condensation 8. The interval Ser-10127–Val-10529 is adenylation 8. Residues Arg-10588–Leu-10768 form a methyltransferase (M) domain 6 region. A Carrier 8 domain is found at Ala-11052–Ser-11126. Ser-11086 carries the post-translational modification O-(pantetheine 4'-phosphoryl)serine. Positions Ser-11144–Thr-11567 are condensation 9. Residues Thr-11616 to Val-12019 are adenylation 9. Residues Ala-12124–Ser-12198 enclose the Carrier 9 domain. The residue at position 12158 (Ser-12158) is an O-(pantetheine 4'-phosphoryl)serine. The interval Ser-12216–Asp-12645 is condensation 10. Positions Thr-12696 to Val-13096 are adenylation 10. The methyltransferase (M) domain 7 stretch occupies residues Tyr-13162–Asp-13343. The Carrier 10 domain occupies Ala-13620–Ser-13694. Ser-13654 carries the O-(pantetheine 4'-phosphoryl)serine modification. The condensation 11 stretch occupies residues Glu-13710–Leu-14143. Residues Thr-14194 to Val-14598 are adenylation 11. Residues Ala-14695–Gln-14769 form the Carrier 11 domain. Ser-14729 bears the O-(pantetheine 4'-phosphoryl)serine mark. Residues Asp-14814 to Gln-15158 form a condensation 12 region. Residues Gln-15169 to Val-15224 are disordered. Over residues Ala-15173 to Asn-15211 the composition is skewed to low complexity. Over residues Ser-15213 to Val-15224 the composition is skewed to polar residues.

It belongs to the NRP synthetase family. Requires pantetheine 4'-phosphate as cofactor.

In terms of biological role, nonribosomal peptide synthetase; part of the gene cluster that mediates the biosynthesis of the cycloundecapeptide cyclosporin A (CsA), a compound with antifungal activity used as an immunosuppressant drug. Cyclosporin A contains three non-proteinogenic amino acids: D-alanine, alpha-amino butyric acid and the unusual amino acid (4R)-4-[(E)-2-butenyl]-4-methyl-l-threonine (Bmt). The nonribosomal peptide synthetase (NRPS) catalyzes the elongation and cyclization of the undecapeptide chain. SimA contains 11 modules responsible for sequential uptake of substrates and chain elongation. In addition to the core condensation-adenylation-thiolation (C-A-T) domains present in each module, seven modules contain an additional N-methylation (M) domain (modules 2, 3, 4, 5, 7, 8, and 10). The terminal C domain (C12 or Ct) is implicated in cyclization of the peptidyl chains to form CsA. The first module (A1) takes up D-Ala which is provided by the alanine racemase simB. The A2, A3, A8, and A10 domains have the same substrate-specific signature for recognition of leucine residues. The unusual amino acid (4R)-4-[(E)-2-butenyl]-4-methyl-l-threonine (Bmt) is recognized by the fifth module (A5). The A11 domain recognizes L-Ala. The PKS simG mediates the biosynthesis of 3R-hydroxyl-4R-methyl-6E-octenoic acid from acetyl coenzyme A (acetyl-CoA), malonyl-CoA, and S-adenosylmethionine, and 3R-hydroxyl-4R-methyl-6E-octenoic acid is then be repeatedly oxidized by simI to 3R-hydroxy-4R-methyl-2-keto-6E-octenoic acid. The latter is likely converted to Bmt through the action of the aminotransferase SimJ. The sequence is that of Cyclosporin synthetase simA from Tolypocladium inflatum (Cyclosporin fungus).